A 275-amino-acid chain; its full sequence is Lectin DB58 (275 aa).

Residues 1–22 (MASSTVSVVLSLFLLLLTQAYS) form the signal peptide. N-linked (GlcNAc...) asparagine glycosylation is found at asparagine 34 and asparagine 101.

Belongs to the leguminous lectin family. As to quaternary structure, heterodimer, composed of an alpha and a beta subunit derived from a single precursor. In terms of processing, leu-264 is missing in a major portion of the beta subunit, suggesting an origin by sequential removal of amino acids rather than a processing by endoproteolytic cleavage.

Its function is as follows. Metalloglycoprotein, containing Ca, Mg, Mn, and Zn and the carbohydrates galactose, glucosamine, mannose, and fucose. It agglutinates erythrocytes of blood group A1. This is Lectin DB58 from Vigna unguiculata subsp. cylindrica (Horse gram).